A 1378-amino-acid chain; its full sequence is DNA-directed RNA polymerase subunit beta (1378 aa).

Belongs to the RNA polymerase beta chain family. The RNAP catalytic core consists of 2 alpha, 1 beta, 1 beta' and 1 omega subunit. When a sigma factor is associated with the core the holoenzyme is formed, which can initiate transcription.

It carries out the reaction RNA(n) + a ribonucleoside 5'-triphosphate = RNA(n+1) + diphosphate. DNA-dependent RNA polymerase catalyzes the transcription of DNA into RNA using the four ribonucleoside triphosphates as substrates. The protein is DNA-directed RNA polymerase subunit beta of Roseobacter denitrificans (strain ATCC 33942 / OCh 114) (Erythrobacter sp. (strain OCh 114)).